The following is a 392-amino-acid chain: MKATGIVVEYNPFHNGHQLHLNKARELTKADVVIAVMSGSFVQRGEPAILPKWERTKMALAAGVDMVVELPVSFATQHATIFAEESVRILDALHVDALFFGSEHGVSEDFLTAAKTVVEHEASFNQAIQLALIDKKTSYARAYTETFKQSFGTELLDVTKPNNILGFHYALAIQKQNPTISLQTMARIHAGYHDIEANHDQIASATAIRKLLLAGNLEEASRYLPASSIEILKNYDGPFLSWENYWALLKYRLIQAETDELEGIRNVSEGIQNRMQIAATKAQYFSDFIESMKTKRYSNARIQRTALQILLNARNIPSAPYIRILGMNKTGQKYLSHHKKNISLPIVTTVSKAAPGLLEEDLRATNIYTLVKGLENYQAGDFHIPPILKSQT.

ATP is bound by residues 7-20, glycine 101, asparagine 162, and 187-188; these read VVEYNPFHNGHQLH and RI.

The protein belongs to the TmcAL family.

The protein resides in the cytoplasm. The enzyme catalyses cytidine(34) in elongator tRNA(Met) + acetate + ATP = N(4)-acetylcytidine(34) in elongator tRNA(Met) + AMP + diphosphate. Its function is as follows. Catalyzes the formation of N(4)-acetylcytidine (ac(4)C) at the wobble position of elongator tRNA(Met), using acetate and ATP as substrates. First activates an acetate ion to form acetyladenylate (Ac-AMP) and then transfers the acetyl group to tRNA to form ac(4)C34. This is tRNA(Met) cytidine acetate ligase from Listeria welshimeri serovar 6b (strain ATCC 35897 / DSM 20650 / CCUG 15529 / CIP 8149 / NCTC 11857 / SLCC 5334 / V8).